A 145-amino-acid chain; its full sequence is uncharacterized protein (145 aa).

It belongs to the methyltransferase superfamily.

Functionally, probable methyltransferase. This is an uncharacterized protein from Schizosaccharomyces pombe (strain 972 / ATCC 24843) (Fission yeast).